The following is a 360-amino-acid chain: Endolytic murein transglycosylase (360 aa).

A helical membrane pass occupies residues 16–36 (IILSSIVVLFLIIGGAFLYGK).

Belongs to the transglycosylase MltG family.

The protein resides in the cell membrane. It carries out the reaction a peptidoglycan chain = a peptidoglycan chain with N-acetyl-1,6-anhydromuramyl-[peptide] at the reducing end + a peptidoglycan chain with N-acetylglucosamine at the non-reducing end.. Functionally, functions as a peptidoglycan terminase that cleaves nascent peptidoglycan strands endolytically to terminate their elongation. This Bacillus subtilis (strain 168) protein is Endolytic murein transglycosylase.